The following is a 333-amino-acid chain: Ferrochelatase (333 aa).

Fe cation contacts are provided by histidine 202 and glutamate 284.

Belongs to the ferrochelatase family.

The protein resides in the cytoplasm. The catalysed reaction is heme b + 2 H(+) = protoporphyrin IX + Fe(2+). Its pathway is porphyrin-containing compound metabolism; protoheme biosynthesis; protoheme from protoporphyrin-IX: step 1/1. Its function is as follows. Catalyzes the ferrous insertion into protoporphyrin IX. The sequence is that of Ferrochelatase from Francisella tularensis subsp. tularensis (strain FSC 198).